A 170-amino-acid polypeptide reads, in one-letter code: Large ribosomal subunit protein uL10 (170 aa).

The protein belongs to the universal ribosomal protein uL10 family. Part of the ribosomal stalk of the 50S ribosomal subunit. The N-terminus interacts with L11 and the large rRNA to form the base of the stalk. The C-terminus forms an elongated spine to which L12 dimers bind in a sequential fashion forming a multimeric L10(L12)X complex.

Its function is as follows. Forms part of the ribosomal stalk, playing a central role in the interaction of the ribosome with GTP-bound translation factors. The sequence is that of Large ribosomal subunit protein uL10 from Lactobacillus helveticus (strain DPC 4571).